Here is a 2207-residue protein sequence, read N- to C-terminus: Desmoplakin-B (2207 aa).

Coiled-coil stretches lie at residues 506-916 (MEEL…EAGK), 952-1000 (AKHA…EQGR), and 1029-1063 (TERL…LLKN). A compositionally biased stretch (basic and acidic residues) spans 905–924 (KQRQVAEEEAGKRRRTESQL). The disordered stretch occupies residues 905 to 933 (KQRQVAEEEAGKRRRTESQLEKSSQAMRE). Plectin repeat units lie at residues 1369–1406 (LLEA…DKKQ), 1407–1445 (LLIA…TLRL), 1446–1483 (LQAQ…YQAL), 1571–1609 (YLRG…TLEL), 1610–1647 (LEAQ…KDKL), 1685–1723 (LLEA…NQIL), 1783–1811 (IVDP…FLEL), 1992–2029 (LLEA…MANR), and 2068–2106 (FLEF…AQRL). Polar residues predominate over residues 2155 to 2164 (ISSPYNLSNP). Residues 2155-2207 (ISSPYNLSNPGSASGSRSGSRRGSVDYSLSPSSSSRYSSFSYSRTSFSSRSLS) form a disordered region. Positions 2165–2207 (GSASGSRSGSRRGSVDYSLSPSSSSRYSSFSYSRTSFSSRSLS) are enriched in low complexity.

It belongs to the plakin or cytolinker family.

Its subcellular location is the cell junction. The protein localises to the desmosome. It localises to the cell membrane. Its function is as follows. Involved in the organization of desmosome cell-cell junctions. Of particular importance in cell adhesion in the skin and during cardiac development. May also play a role in the regulation of Wnt, TGF-beta and Hippo signaling pathways. This Danio rerio (Zebrafish) protein is Desmoplakin-B.